A 494-amino-acid chain; its full sequence is Truncated non-functional calcium-binding mitochondrial carrier SAL1-1 (494 aa).

One can recognise an EF-hand 1 domain in the interval 11–46 (QRDIRYACLFKELDVKGNGQVTLDNLISAFEKNDHP). Ca(2+) is bound by residues Lys65, Asp70, Asp93, Asp95, Asp97, Lys99, and Glu104. 3 consecutive EF-hand domains span residues 80–115 (NAESQIWNGFQRIDLDHDGKIGINEINRYLSDLDNQ), 120–155 (NELNHELSNEKVNKFSRFFEWAFPKRKANIALRGQA), and 156–191 (SHKKNTDNDRSKKTTDSDLYVTYDQWRDFLLLVPRK). Residues Thr161 and Ser166 each contribute to the Ca(2+) site. 2 Solcar repeats span residues 225–332 (IRGF…TKKI) and 345–434 (LSKF…LKKM). The next 5 helical transmembrane spans lie at 231–248 (FIAGGISGVISRTCTAPF), 307–326 (GNGLNVIKVFPESSIKFGSF), 355–368 (GLAGMAAQFSVYPI), 409–428 (RCHSRYSGHISLCCIRFGDF), and 458–475 (TSNGCIQWNCRSFCCLSN). A Solcar 3; truncated repeat occupies 452-494 (SKQPGCTSNGCIQWNCRSFCCLSNQSFKNKTTSPRNICTSLCV).

The protein belongs to the mitochondrial carrier (TC 2.A.29) family.

It localises to the mitochondrion inner membrane. In terms of biological role, calcium-dependent mitochondrial solute carrier. This Saccharomyces cerevisiae (strain ATCC 204508 / S288c) (Baker's yeast) protein is Truncated non-functional calcium-binding mitochondrial carrier SAL1-1 (SAL1).